A 308-amino-acid polypeptide reads, in one-letter code: Cytochrome c biogenesis protein CcsA (308 aa).

A run of 7 helical transmembrane segments spans residues 17-37, 43-63, 70-90, 142-162, 213-233, 246-260, and 274-294; these read IISIVIPTHLMTLVYEIVGLC, GMITTFFCITGLLVTRWIYSG, LYESLMFLSWSFSLIHIVPYF, MLLSYAALLCGSLLSITLLVI, VIGLGFTLLTIGILSGAVWAN, ETWAFITWTVFAIYL, and AIVASMGFLIIWICYFGVNLL.

Belongs to the CcmF/CycK/Ccl1/NrfE/CcsA family. May interact with Ccs1.

The protein resides in the plastid. Its subcellular location is the chloroplast thylakoid membrane. In terms of biological role, required during biogenesis of c-type cytochromes (cytochrome c6 and cytochrome f) at the step of heme attachment. This Nymphaea alba (White water-lily) protein is Cytochrome c biogenesis protein CcsA.